The sequence spans 420 residues: Glucose-1-phosphate adenylyltransferase (420 aa).

Residues tyrosine 107, glycine 173, 188-189 (EK), and serine 206 contribute to the alpha-D-glucose 1-phosphate site.

The protein belongs to the bacterial/plant glucose-1-phosphate adenylyltransferase family. In terms of assembly, homotetramer.

It catalyses the reaction alpha-D-glucose 1-phosphate + ATP + H(+) = ADP-alpha-D-glucose + diphosphate. The protein operates within glycan biosynthesis; glycogen biosynthesis. In terms of biological role, involved in the biosynthesis of ADP-glucose, a building block required for the elongation reactions to produce glycogen. Catalyzes the reaction between ATP and alpha-D-glucose 1-phosphate (G1P) to produce pyrophosphate and ADP-Glc. This is Glucose-1-phosphate adenylyltransferase from Shewanella sp. (strain ANA-3).